The primary structure comprises 298 residues: Ethylmalonyl-CoA decarboxylase (298 aa).

The protein belongs to the enoyl-CoA hydratase/isomerase family.

The protein resides in the cytoplasm. The protein localises to the cytosol. The catalysed reaction is (2S)-ethylmalonyl-CoA + H(+) = butanoyl-CoA + CO2. It carries out the reaction (S)-methylmalonyl-CoA + H(+) = propanoyl-CoA + CO2. The enzyme catalyses (2R)-ethylmalonyl-CoA + H(+) = butanoyl-CoA + CO2. Decarboxylates ethylmalonyl-CoA, a potentially toxic metabolite, to form butyryl-CoA, suggesting it might be involved in metabolite proofreading. Acts preferentially on (S)-ethylmalonyl-CoA but also has some activity on the (R)-isomer. Also has methylmalonyl-CoA decarboxylase activity at lower level. In Gallus gallus (Chicken), this protein is Ethylmalonyl-CoA decarboxylase (ECHDC1).